The sequence spans 483 residues: SET domain and MYND-type zinc finger protein 6 (483 aa).

Positions Pro-4–Ile-228 constitute an SET domain. Zn(2+) contacts are provided by Cys-49, Cys-52, Cys-62, Cys-65, Cys-71, Cys-75, His-83, and Cys-87. The MYND-type zinc finger occupies Cys-49–Cys-87.

This sequence belongs to the class V-like SAM-binding methyltransferase superfamily.

The protein localises to the cytoplasm. Its subcellular location is the nucleus. The protein is SET domain and MYND-type zinc finger protein 6 (set6) of Schizosaccharomyces pombe (strain 972 / ATCC 24843) (Fission yeast).